Consider the following 226-residue polypeptide: PDGF-related-transforming protein sis (226 aa).

The span at 201–215 (RRPPKGKHRKCKHTH) shows a compositional bias: basic residues. The tract at residues 201-226 (RRPPKGKHRKCKHTHDKTALKETLGA) is disordered.

Belongs to the PDGF/VEGF growth factor family.

The sequence is that of PDGF-related-transforming protein sis (V-SIS) from Woolly monkey sarcoma virus (WMSV).